Reading from the N-terminus, the 317-residue chain is Melanocyte-stimulating hormone receptor (317 aa).

Residues 1–37 are Extracellular-facing; that stretch reads MPVQGSLRSLVGAVNSTPTASPHLRPATNQTEPQCLE. N29 carries an N-linked (GlcNAc...) asparagine glycan. Residues 38–63 form a helical membrane-spanning segment; sequence VSVPVGLFLCLGLVSLVENTLVVAVI. The Cytoplasmic segment spans residues 64–72; it reads AKNRNLHSP. The chain crosses the membrane as a helical span at residues 73–93; sequence MYCFICCLALSDLLVSVSNVL. Over 94–118 the chain is Extracellular; it reads KTAVLLLLEAGALAAQATVVQQLGN. A helical transmembrane segment spans residues 119–140; that stretch reads VINMLICSSMVSSLCFLGAIAM. The Cytoplasmic portion of the chain corresponds to 141 to 163; it reads DRYISIFYALRYHSIVTLARARR. Residues 164–183 traverse the membrane as a helical segment; it reads AIAAVWVASILSSILFFTYY. At 184–191 the chain is on the extracellular side; the sequence is DRTAALLC. A helical membrane pass occupies residues 192–211; the sequence is LVVFFLAMLVLMAVLYVHML. The Cytoplasmic portion of the chain corresponds to 212-240; sequence TQACQHAQGIARLHKRQHPVQQGWGLKGA. Residues 241–266 form a helical membrane-spanning segment; the sequence is ATLAVLLGVFFLCWGPLFLHLTLIAV. Residues 267–279 are Extracellular-facing; it reads CPQHPTCNCIVKN. A helical transmembrane segment spans residues 280–300; it reads FKLFLALIICNAIVDPLIYAF. Over 301-317 the chain is Cytoplasmic; that stretch reads RSQELRKTLKEVLLFSW.

The protein belongs to the G-protein coupled receptor 1 family. As to quaternary structure, interacts with MGRN1, but does not undergo MGRN1-mediated ubiquitination; this interaction competes with GNAS-binding and thus inhibits agonist-induced cAMP production. Interacts with OPN3; the interaction results in a decrease in MC1R-mediated cAMP signaling and ultimately a decrease in melanin production in melanocytes.

Its subcellular location is the cell membrane. Receptor for MSH (alpha, beta and gamma) and ACTH. The activity of this receptor is mediated by G proteins which activate adenylate cyclase. Mediates melanogenesis, the production of eumelanin (black/brown) and phaeomelanin (red/yellow), via regulation of cAMP signaling in melanocytes. The polypeptide is Melanocyte-stimulating hormone receptor (MC1R) (Varecia rubra (Red ruffed lemur)).